The chain runs to 677 residues: Elongation factor G 2 (677 aa).

The region spanning 8-283 (SRIRNIGIIA…AVVNFLPSPE (276 aa)) is the tr-type G domain. GTP contacts are provided by residues 17 to 24 (AHIDAGKT), 81 to 85 (DTPGH), and 135 to 138 (NKMD).

It belongs to the TRAFAC class translation factor GTPase superfamily. Classic translation factor GTPase family. EF-G/EF-2 subfamily.

The protein resides in the cytoplasm. In terms of biological role, catalyzes the GTP-dependent ribosomal translocation step during translation elongation. During this step, the ribosome changes from the pre-translocational (PRE) to the post-translocational (POST) state as the newly formed A-site-bound peptidyl-tRNA and P-site-bound deacylated tRNA move to the P and E sites, respectively. Catalyzes the coordinated movement of the two tRNA molecules, the mRNA and conformational changes in the ribosome. This Syntrophus aciditrophicus (strain SB) protein is Elongation factor G 2.